A 506-amino-acid chain; its full sequence is GMP synthase [glutamine-hydrolyzing] (506 aa).

A Glutamine amidotransferase type-1 domain is found at 4-192 (KLIILDFGSQ…FLDICGMKRD (189 aa)). The active-site Nucleophile is the Cys79. Catalysis depends on residues His167 and Glu169. Positions 193–381 (WTPASFIEAT…LGMMPHLIHR (189 aa)) constitute a GMPS ATP-PPase domain. 220–226 (SGGVDSS) contributes to the ATP binding site.

As to quaternary structure, homodimer.

It catalyses the reaction XMP + L-glutamine + ATP + H2O = GMP + L-glutamate + AMP + diphosphate + 2 H(+). It participates in purine metabolism; GMP biosynthesis; GMP from XMP (L-Gln route): step 1/1. Its function is as follows. Catalyzes the synthesis of GMP from XMP. The protein is GMP synthase [glutamine-hydrolyzing] of Porphyromonas gingivalis (strain ATCC 33277 / DSM 20709 / CIP 103683 / JCM 12257 / NCTC 11834 / 2561).